Reading from the N-terminus, the 151-residue chain is Probable cGMP 3',5'-cyclic phosphodiesterase subunit delta (151 aa).

The protein belongs to the PDE6D/unc-119 family. As to quaternary structure, interacts with Pde6.

The protein resides in the nucleus. Its subcellular location is the cytoplasm. This chain is Probable cGMP 3',5'-cyclic phosphodiesterase subunit delta, found in Drosophila virilis (Fruit fly).